The chain runs to 207 residues: Fibroblast growth factor 18 (207 aa).

An N-terminal signal peptide occupies residues 1-27 (MYSAPSACTCLCLHFLLLCFQVQVLAA). The N-linked (GlcNAc...) asparagine glycan is linked to N39. The cysteines at positions 109 and 127 are disulfide-linked. N137 carries an N-linked (GlcNAc...) asparagine glycan. The segment at 157-183 (GRPRKGPKTRENQQDVHFMKRYPKGQT) is disordered. Residues 164–174 (KTRENQQDVHF) are compositionally biased toward basic and acidic residues.

The protein belongs to the heparin-binding growth factors family. Interacts with FGFR3 and FGFR4. In terms of tissue distribution, mainly expressed in the lung. Not detected in brain, heart, liver, kidney and small intestine.

It localises to the secreted. Its function is as follows. Plays an important role in the regulation of cell proliferation, cell differentiation and cell migration. Required for normal ossification and bone development. Stimulates hepatic and intestinal proliferation. In Rattus norvegicus (Rat), this protein is Fibroblast growth factor 18 (Fgf18).